The primary structure comprises 153 residues: Endoribonuclease YbeY (153 aa).

Zn(2+)-binding residues include His-113, His-117, and His-123.

It belongs to the endoribonuclease YbeY family. The cofactor is Zn(2+).

The protein localises to the cytoplasm. Single strand-specific metallo-endoribonuclease involved in late-stage 70S ribosome quality control and in maturation of the 3' terminus of the 16S rRNA. This is Endoribonuclease YbeY from Aliivibrio fischeri (strain ATCC 700601 / ES114) (Vibrio fischeri).